The chain runs to 387 residues: 3-ketoacyl-CoA thiolase (387 aa).

The active-site Acyl-thioester intermediate is the Cys-91. Catalysis depends on proton acceptor residues His-343 and Cys-373.

This sequence belongs to the thiolase-like superfamily. Thiolase family. Heterotetramer of two alpha chains (FadB) and two beta chains (FadA).

It is found in the cytoplasm. The enzyme catalyses an acyl-CoA + acetyl-CoA = a 3-oxoacyl-CoA + CoA. It participates in lipid metabolism; fatty acid beta-oxidation. Catalyzes the final step of fatty acid oxidation in which acetyl-CoA is released and the CoA ester of a fatty acid two carbons shorter is formed. The polypeptide is 3-ketoacyl-CoA thiolase (Vibrio cholerae serotype O1 (strain ATCC 39315 / El Tor Inaba N16961)).